Here is a 227-residue protein sequence, read N- to C-terminus: MRVAGAAKLVVAVAVFLLTFYVISQVFEIKMDASLGNLFARSALDAVVRSTKPPRYKCGISKACPEKHFAFKMASGAANVVGPKICLEDNVLMSGVKNNVGRGINVALVNGKTGELIDTRFFDMWGGNVAPFIEFLKAIQDGTIVLMGTYDDGATKLNDEARRLIAELGSTSITHLGFRDNWVFCGGKGIKTKSPFEQHIKNNKDTNKYEGWPEVVEMEGCIPQKQD.

The N-terminal stretch at 1–24 is a signal peptide; sequence MRVAGAAKLVVAVAVFLLTFYVIS. Intrachain disulfides connect Cys-58/Cys-86 and Cys-64/Cys-221. The 159-residue stretch at 67–225 folds into the GG-type lectin domain; it reads KHFAFKMASG…VEMEGCIPQK (159 aa).

This sequence belongs to the FAM3 family.

The protein resides in the secreted. The protein localises to the cytoplasmic vesicle. May be involved in retinal laminar formation. Promotes epithelial to mesenchymal transition. The protein is Protein FAM3C (FAM3C) of Bos taurus (Bovine).